The sequence spans 947 residues: Bifunctional glutamine synthetase adenylyltransferase/adenylyl-removing enzyme (947 aa).

Positions 1–440 are adenylyl removase; sequence MTPLSSPLSQ…VFNELIGDDE (440 aa). Residues 450-947 form an adenylyl transferase region; it reads SEPWREVWQD…ASWRKWLVAV (498 aa).

It belongs to the GlnE family. Requires Mg(2+) as cofactor.

It carries out the reaction [glutamine synthetase]-O(4)-(5'-adenylyl)-L-tyrosine + phosphate = [glutamine synthetase]-L-tyrosine + ADP. It catalyses the reaction [glutamine synthetase]-L-tyrosine + ATP = [glutamine synthetase]-O(4)-(5'-adenylyl)-L-tyrosine + diphosphate. Involved in the regulation of glutamine synthetase GlnA, a key enzyme in the process to assimilate ammonia. When cellular nitrogen levels are high, the C-terminal adenylyl transferase (AT) inactivates GlnA by covalent transfer of an adenylyl group from ATP to specific tyrosine residue of GlnA, thus reducing its activity. Conversely, when nitrogen levels are low, the N-terminal adenylyl removase (AR) activates GlnA by removing the adenylyl group by phosphorolysis, increasing its activity. The regulatory region of GlnE binds the signal transduction protein PII (GlnB) which indicates the nitrogen status of the cell. This Salmonella schwarzengrund (strain CVM19633) protein is Bifunctional glutamine synthetase adenylyltransferase/adenylyl-removing enzyme.